The sequence spans 476 residues: Serine protease HTRA4 (476 aa).

Positions 1 to 31 (MIRPQLRTAGLGRCLLPGLLLLLVPVLWAGA) are cleaved as a signal peptide. One can recognise an IGFBP N-terminal domain in the interval 36-109 (TQPSCPAVCQ…PGFPSTCGCP (74 aa)). Intrachain disulfides connect Cys40-Cys66, Cys44-Cys68, Cys49-Cys69, Cys55-Cys72, Cys80-Cys94, Cys88-Cys106, Cys108-Cys127, and Cys116-Cys152. In terms of domain architecture, Kazal-like spans 88–154 (CAPGLQCLQP…VPVQWGNCGD (67 aa)). A serine protease region spans residues 202–362 (GSGFIVSEDG…IPSDRVRQFL (161 aa)). Catalysis depends on charge relay system residues His218, Asp248, and Ser326. Residues 383-474 (LQMLSLTVPL…NLLLTVIPET (92 aa)) form the PDZ domain.

It belongs to the peptidase S1C family.

It is found in the secreted. Functionally, serine protease. The chain is Serine protease HTRA4 (HTRA4) from Homo sapiens (Human).